The chain runs to 1653 residues: Ciliary rootlet coiled-coil protein 2 (1653 aa).

A compositionally biased stretch (polar residues) spans 1–17 (MSSASSEPGNGDASQQP). The tract at residues 1–57 (MSSASSEPGNGDASQQPLLGLDTVIQRLEDTILSPTASREDRALTVRGEGRQASPTP) is disordered. A compositionally biased stretch (basic and acidic residues) spans 38–50 (SREDRALTVRGEG). Coiled-coil stretches lie at residues 86 to 145 (VARV…SELE) and 310 to 351 (KVAL…LVAQ). The segment at 367-396 (LGEPRRPLRSPQRATSPHQGASPPHICSPA) is disordered. A coiled-coil region spans residues 423–1215 (LKSSQALVAS…QRKLAEVEAA (793 aa)). The disordered stretch occupies residues 1302 to 1356 (GLQRQSPWASPEQPGSPTKGSDSSQALPGQQGTSPPARPHSPLRWPSPTPGGRSS). The segment covering 1304-1335 (QRQSPWASPEQPGSPTKGSDSSQALPGQQGTS) has biased composition (polar residues). Residues 1361–1570 (VATVQDILRD…QAQMTEMEQA (210 aa)) are a coiled coil.

The protein belongs to the rootletin family.

This chain is Ciliary rootlet coiled-coil protein 2, found in Homo sapiens (Human).